A 292-amino-acid chain; its full sequence is 4-hydroxybenzoate octaprenyltransferase (292 aa).

8 consecutive transmembrane segments (helical) span residues Pro23–Gly43, Pro47–Ile67, Leu98–Leu118, His141–Ala161, Gly164–Tyr184, Tyr211–Gly231, Tyr233–Tyr253, and Phe270–Trp290.

It belongs to the UbiA prenyltransferase family. The cofactor is Mg(2+).

Its subcellular location is the cell inner membrane. The enzyme catalyses all-trans-octaprenyl diphosphate + 4-hydroxybenzoate = 4-hydroxy-3-(all-trans-octaprenyl)benzoate + diphosphate. The protein operates within cofactor biosynthesis; ubiquinone biosynthesis. Catalyzes the prenylation of para-hydroxybenzoate (PHB) with an all-trans polyprenyl group. Mediates the second step in the final reaction sequence of ubiquinone-8 (UQ-8) biosynthesis, which is the condensation of the polyisoprenoid side chain with PHB, generating the first membrane-bound Q intermediate 3-octaprenyl-4-hydroxybenzoate. This chain is 4-hydroxybenzoate octaprenyltransferase, found in Methylococcus capsulatus (strain ATCC 33009 / NCIMB 11132 / Bath).